A 321-amino-acid polypeptide reads, in one-letter code: NADPH-dependent D-xylose reductase (321 aa).

Catalysis depends on Tyr50, which acts as the Proton donor. Residue His112 participates in substrate binding. NADP(+) is bound by residues 167–168 (SN), 216–225 (SSFGPQSFVE), and 272–282 (KSNKKERLLGN).

It belongs to the aldo/keto reductase family.

The enzyme catalyses xylitol + NAD(+) = D-xylose + NADH + H(+). It catalyses the reaction xylitol + NADP(+) = D-xylose + NADPH + H(+). It functions in the pathway carbohydrate metabolism; D-xylose degradation. Reduces D-xylose into xylitol. Preferentially utilizes NADPH as a cosubstrate. The polypeptide is NADPH-dependent D-xylose reductase (XYL1) (Candida boidinii (Yeast)).